We begin with the raw amino-acid sequence, 418 residues long: Inner capsid protein sigma-2 (418 aa).

The protein belongs to the orthoreovirus sigma-1 protein family. In terms of assembly, interacts with protein mu-NS; in viral inclusions.

It is found in the virion. Functionally, inner capsid (core) component. In Mammalia (T1L), this protein is Inner capsid protein sigma-2 (S2).